The chain runs to 669 residues: Soluble guanylate cyclase 89Db (669 aa).

His104 serves as a coordination point for heme. The stretch at 430 to 458 (QHCSKLEIMFEKEEQRSDELEKSLELADS) forms a coiled coil. Residues 494–620 (SVIFIEVMNI…DTVNTASRME (127 aa)) form the Guanylate cyclase domain.

It belongs to the adenylyl cyclase class-4/guanylyl cyclase family. In terms of assembly, heterodimer; with Gyc88E, in the presence of magnesium or manganese. Heme serves as cofactor. As to expression, expressed in embryos in a segmental pattern in the ventral nerve cord (VNC) and in the brain, beginning at stage 13 and continuing through to stage 17. Colocalized with Gyc-89Db in several peripheral neurons that innervate trachea, basiconical sensilla and the sensory cones in the posterior segments of the embryo. Expression in wandering 3rd instar larvae is most prominent in a small cluster of cells located in the anterior medial region of each brain lobe. In the VNC, expression is found in scattered cells both laterally and at the midline.

It localises to the cytoplasm. It catalyses the reaction GTP = 3',5'-cyclic GMP + diphosphate. Its activity is regulated as follows. Probably not activated by nitric oxide (NO). Heterodimer exhibits some stimulation, compounds (SIN-1 and two of the NONOates) that were ineffective at stimulating Gyc-88E homodimer did stimulate the heterodimer. Its function is as follows. Heterodimers with Gyc88E are activated in response to changing oxygen concentrations, alerting flies to hypoxic environments. Under normal oxygen concentrations, oxygen binds to the heme group and results in low levels of guanylyl cyclase activity. When exposed to reduced oxygen concentrations, the oxygen dissociates from the heme group resulting in activation of the enzyme. In Drosophila melanogaster (Fruit fly), this protein is Soluble guanylate cyclase 89Db.